We begin with the raw amino-acid sequence, 440 residues long: MFLAQEIIRKKRDGHALSDEEIRFFINGIRDNTISEGQIAALAMTIFFHDMTMPERVSLTMAMRDSGTVLDWKSLHLNGPIVDKHSTGGVGDVTSLMLGPMVAACGGYIPMISGRGLGHTGGTLDKLESIPGFDIFPDDNRFREIIKDVGVAIIGQTSSLAPADKRFYATRDITATVDSIPLITASILAKKLAEGLDALVMDVKVGSGAFMPTYELSEALAEAIVGVANGAGVRTTALLTDMNQVLASSAGNAVEVREAVQFLTGEYRNPRLFDVTMALCVEMLISSKLAKDDAEARAKLQAVLDNGKAAEVFGRMVAAQKGPTDFVENYAKYLPTAMLTKAVYADTEGFVSEMDTRALGMAVVAMGGGRRQASDTIDYSVGFTDMARLGDQVDGQRPLAVIHAKDENSWQEAAKAVKAAIKLADKAPESTPTVYRRISE.

It belongs to the thymidine/pyrimidine-nucleoside phosphorylase family. In terms of assembly, homodimer.

It catalyses the reaction thymidine + phosphate = 2-deoxy-alpha-D-ribose 1-phosphate + thymine. It participates in pyrimidine metabolism; dTMP biosynthesis via salvage pathway; dTMP from thymine: step 1/2. The enzymes which catalyze the reversible phosphorolysis of pyrimidine nucleosides are involved in the degradation of these compounds and in their utilization as carbon and energy sources, or in the rescue of pyrimidine bases for nucleotide synthesis. This Escherichia coli O127:H6 (strain E2348/69 / EPEC) protein is Thymidine phosphorylase.